Consider the following 140-residue polypeptide: Transmembrane protein 107 (140 aa).

2 helical membrane-spanning segments follow: residues 7 to 27 (LVPSRFLTLLAHLVVVITLFW) and 53 to 73 (LVAALCLTLGLFAVELAGFLS). Residue Asn79 is glycosylated (N-linked (GlcNAc...) asparagine). 2 helical membrane-spanning segments follow: residues 83–103 (SLLSIAAHCSASVALSFFVFE) and 113–133 (IFTFCSAFPAVTETALFIAVF).

As to quaternary structure, part of the tectonic-like complex (also named B9 complex). Interacts with TMEM237, TMEM231, MKS1 and TMEM216.

It is found in the membrane. The protein resides in the cell projection. Its subcellular location is the cilium. Plays a role in cilia formation and embryonic patterning. Requires for normal Sonic hedgehog (Shh) signaling in the neural tube and acts in combination with GLI2 and GLI3 to pattern ventral and intermediate neuronal cell types. During ciliogenesis regulates the ciliary transition zone localization of some MKS complex proteins. This is Transmembrane protein 107 from Mus musculus (Mouse).